The chain runs to 442 residues: 3-phosphoshikimate 1-carboxyvinyltransferase (442 aa).

3-phosphoshikimate contacts are provided by lysine 27, serine 28, and arginine 32. A phosphoenolpyruvate-binding site is contributed by lysine 27. The phosphoenolpyruvate site is built by glycine 100 and arginine 128. Serine 174, serine 175, glutamine 176, serine 204, aspartate 321, and lysine 348 together coordinate 3-phosphoshikimate. A phosphoenolpyruvate-binding site is contributed by glutamine 176. Residue aspartate 321 is the Proton acceptor of the active site. Residues arginine 352, arginine 394, and lysine 424 each contribute to the phosphoenolpyruvate site.

It belongs to the EPSP synthase family. As to quaternary structure, monomer.

Its subcellular location is the cytoplasm. It catalyses the reaction 3-phosphoshikimate + phosphoenolpyruvate = 5-O-(1-carboxyvinyl)-3-phosphoshikimate + phosphate. It participates in metabolic intermediate biosynthesis; chorismate biosynthesis; chorismate from D-erythrose 4-phosphate and phosphoenolpyruvate: step 6/7. In terms of biological role, catalyzes the transfer of the enolpyruvyl moiety of phosphoenolpyruvate (PEP) to the 5-hydroxyl of shikimate-3-phosphate (S3P) to produce enolpyruvyl shikimate-3-phosphate and inorganic phosphate. The chain is 3-phosphoshikimate 1-carboxyvinyltransferase from Herminiimonas arsenicoxydans.